We begin with the raw amino-acid sequence, 450 residues long: UDP-N-acetylmuramoylalanine--D-glutamate ligase (450 aa).

Position 115 to 121 (115 to 121 (GTNGKST)) interacts with ATP.

This sequence belongs to the MurCDEF family.

The protein resides in the cytoplasm. The enzyme catalyses UDP-N-acetyl-alpha-D-muramoyl-L-alanine + D-glutamate + ATP = UDP-N-acetyl-alpha-D-muramoyl-L-alanyl-D-glutamate + ADP + phosphate + H(+). Its pathway is cell wall biogenesis; peptidoglycan biosynthesis. Cell wall formation. Catalyzes the addition of glutamate to the nucleotide precursor UDP-N-acetylmuramoyl-L-alanine (UMA). The sequence is that of UDP-N-acetylmuramoylalanine--D-glutamate ligase from Syntrophotalea carbinolica (strain DSM 2380 / NBRC 103641 / GraBd1) (Pelobacter carbinolicus).